Consider the following 704-residue polypeptide: Lebercilin (704 aa).

Residues methionine 1 to lysine 14 show a composition bias toward basic and acidic residues. The segment at methionine 1–lysine 80 is disordered. Serine 7 carries the post-translational modification Phosphoserine. The segment covering serine 25–proline 40 has biased composition (low complexity). Residue serine 48 is modified to Phosphoserine. Residues threonine 49–valine 63 show a composition bias toward basic and acidic residues. A coiled-coil region spans residues lysine 105–isoleucine 300. 2 disordered regions span residues glutamine 389–glutamate 417 and glutamate 476–glutamate 661. Positions glutamine 404–glutamate 417 are enriched in basic and acidic residues. The stretch at alanine 448–aspartate 479 forms a coiled coil. Positions serine 496–threonine 505 are enriched in basic and acidic residues. The span at glycine 570–serine 591 shows a compositional bias: polar residues. Residues proline 592 to threonine 608 show a composition bias toward basic and acidic residues. Residues serine 617–serine 627 show a composition bias toward low complexity.

Belongs to the LCA5 family. As to quaternary structure, interacts with NINL. Interacts with OFD1. Interacts with FAM161A. Interacts with components of the IFT complex B. In terms of tissue distribution, detected in several tissues.

The protein localises to the cytoplasm. It is found in the cytoskeleton. It localises to the cilium axoneme. Its subcellular location is the cilium basal body. The protein resides in the cell projection. The protein localises to the cilium. Its function is as follows. Involved in intraflagellar protein (IFT) transport in photoreceptor cilia. The protein is Lebercilin (Lca5) of Mus musculus (Mouse).